The following is a 312-amino-acid chain: Malate dehydrogenase (312 aa).

Residues 12 to 17 (GAGFTG) and D36 contribute to the NAD(+) site. Residues R87 and R93 each contribute to the substrate site. NAD(+) is bound by residues N100 and 123–125 (LTN). N125 is a substrate binding site. S149 is modified (phosphoserine). R156 is a substrate binding site. The active-site Proton acceptor is H180.

Belongs to the LDH/MDH superfamily. MDH type 3 family.

It carries out the reaction (S)-malate + NAD(+) = oxaloacetate + NADH + H(+). Functionally, catalyzes the reversible oxidation of malate to oxaloacetate. In Geobacillus thermodenitrificans, this protein is Malate dehydrogenase.